A 279-amino-acid polypeptide reads, in one-letter code: Sperm acrosome membrane-associated protein 1 (279 aa).

The first 29 residues, 1-29 (MKSRGAGCSARLLLTVGWLLLAGLQSTCG), serve as a signal peptide directing secretion. The Extracellular portion of the chain corresponds to 30-221 (INVTAIQDPS…VIICIFVIFV (192 aa)). Asn31 is a glycosylation site (N-linked (GlcNAc...) asparagine). A disordered region spans residues 39-74 (SLAREGEGEPEGDEEPENDSETEKEPQAEAEDDSEG). The segment covering 46–58 (GEPEGDEEPENDS) has biased composition (acidic residues). A helical membrane pass occupies residues 222–242 (LIFIIINWTAVKDFWAKASTT). Residues 243-279 (EIQSELSSMRYKDSTSLDQSPTDIPGHEDDALSEWNE) are Cytoplasmic-facing. Position 253 is a phosphotyrosine (Tyr253). The interval 253–279 (YKDSTSLDQSPTDIPGHEDDALSEWNE) is disordered. Residues Ser262 and Ser275 each carry the phosphoserine modification.

Interacts with CYLC1; the interaction may be relevant for proper acrosome attachment to the nuclear envelope. N-glycosylated.

The protein resides in the cytoplasmic vesicle. The protein localises to the secretory vesicle. It is found in the acrosome inner membrane. Plays a role in acrosome expansion and establishment of normal sperm morphology during spermatogenesis. Important for male fertility. The chain is Sperm acrosome membrane-associated protein 1 (SPACA1) from Bos taurus (Bovine).